Here is a 584-residue protein sequence, read N- to C-terminus: UvrABC system protein C (584 aa).

Positions 12–89 (NKPGCYLFFN…IKKYHPKYNV (78 aa)) constitute a GIY-YIG domain. The region spanning 194–229 (NQVKQTLVKQMQKASDNLQFEQAQRIKDQITSLDFI) is the UVR domain.

The protein belongs to the UvrC family. Interacts with UvrB in an incision complex.

It is found in the cytoplasm. Functionally, the UvrABC repair system catalyzes the recognition and processing of DNA lesions. UvrC both incises the 5' and 3' sides of the lesion. The N-terminal half is responsible for the 3' incision and the C-terminal half is responsible for the 5' incision. This chain is UvrABC system protein C, found in Mycoplasma mycoides subsp. mycoides SC (strain CCUG 32753 / NCTC 10114 / PG1).